The sequence spans 50 residues: Insulin (50 aa).

3 disulfides stabilise this stretch: cysteine 7/cysteine 36, cysteine 19/cysteine 49, and cysteine 35/cysteine 40.

It belongs to the insulin family. Heterodimer of a B chain and an A chain linked by two disulfide bonds.

It localises to the secreted. In terms of biological role, insulin decreases blood glucose concentration. It increases cell permeability to monosaccharides, amino acids and fatty acids. It accelerates glycolysis, the pentose phosphate cycle, and glycogen synthesis in liver. This Oncorhynchus gorbuscha (Pink salmon) protein is Insulin (ins).